We begin with the raw amino-acid sequence, 146 residues long: Catabolic 3-dehydroquinase (146 aa).

The active-site Proton acceptor is the Tyr-24. The substrate site is built by Asn-78, His-84, and Asp-91. His-104 serves as the catalytic Proton donor. Residues Ile-105–Thr-106 and Arg-115 each bind substrate.

The protein belongs to the type-II 3-dehydroquinase family. Homododecamer. Adopts a ring-like structure, composed of an arrangement of two hexameric rings stacked on top of one another.

It catalyses the reaction 3-dehydroquinate = 3-dehydroshikimate + H2O. Its pathway is aromatic compound metabolism; 3,4-dihydroxybenzoate biosynthesis; 3,4-dihydroxybenzoate from 3-dehydroquinate: step 1/2. In terms of biological role, is involved in the catabolism of quinate. Allows the utilization of quinate as carbon source via the beta-ketoadipate pathway. This Candida tropicalis (strain ATCC MYA-3404 / T1) (Yeast) protein is Catabolic 3-dehydroquinase.